The sequence spans 126 residues: Large ribosomal subunit protein eL14 (126 aa).

This sequence belongs to the eukaryotic ribosomal protein eL14 family.

The sequence is that of Large ribosomal subunit protein eL14 (RPL14) from Tetrahymena thermophila (strain SB210).